The primary structure comprises 327 residues: Ankyrin repeat domain-containing protein SOWAHD (327 aa).

The interval 1 to 31 (MAQALEDGNPLPKASNRPAESEAPSDPQIKD) is disordered. ANK repeat units lie at residues 112–141 (CLEP…AEPS), 147–162 (DPIT…AKHG), and 186–216 (PGSG…LGAD). A disordered region spans residues 251–311 (ERDRKRENAN…EKKASSTQEG (61 aa)). Over residues 260–275 (NNNSSRTTTTTTTTSR) the composition is skewed to low complexity. Positions 292 to 305 (HYKEASQPVKEKKA) are enriched in basic and acidic residues.

The protein belongs to the SOWAH family.

In Mus musculus (Mouse), this protein is Ankyrin repeat domain-containing protein SOWAHD (Sowahd).